We begin with the raw amino-acid sequence, 284 residues long: 4-diphosphocytidyl-2-C-methyl-D-erythritol kinase (284 aa).

Lys-14 is an active-site residue. Residue 98 to 108 coordinates ATP; it reads PMGGGLGGGSS. Asp-140 is a catalytic residue.

It belongs to the GHMP kinase family. IspE subfamily.

It catalyses the reaction 4-CDP-2-C-methyl-D-erythritol + ATP = 4-CDP-2-C-methyl-D-erythritol 2-phosphate + ADP + H(+). Its pathway is isoprenoid biosynthesis; isopentenyl diphosphate biosynthesis via DXP pathway; isopentenyl diphosphate from 1-deoxy-D-xylulose 5-phosphate: step 3/6. In terms of biological role, catalyzes the phosphorylation of the position 2 hydroxy group of 4-diphosphocytidyl-2C-methyl-D-erythritol. This Shewanella sp. (strain MR-7) protein is 4-diphosphocytidyl-2-C-methyl-D-erythritol kinase.